A 433-amino-acid polypeptide reads, in one-letter code: Chaperone SurA (433 aa).

The first 20 residues, 1-20 (MKNWRTLIFGLMFSVSTAFA), serve as a signal peptide directing secretion. 2 PpiC domains span residues 171–272 (DTEL…KVND) and 282–382 (VTEV…QLLD).

It localises to the periplasm. The catalysed reaction is [protein]-peptidylproline (omega=180) = [protein]-peptidylproline (omega=0). In terms of biological role, chaperone involved in the correct folding and assembly of outer membrane proteins. Recognizes specific patterns of aromatic residues and the orientation of their side chains, which are found more frequently in integral outer membrane proteins. May act in both early periplasmic and late outer membrane-associated steps of protein maturation. This is Chaperone SurA from Photorhabdus laumondii subsp. laumondii (strain DSM 15139 / CIP 105565 / TT01) (Photorhabdus luminescens subsp. laumondii).